The following is a 304-amino-acid chain: tRNA pseudouridine synthase B (304 aa).

The active-site Nucleophile is the Asp38. The PUA domain occupies 227–302 (LPKVEIYKDF…RIFKLKKVFK (76 aa)).

Belongs to the pseudouridine synthase TruB family. Type 1 subfamily.

The catalysed reaction is uridine(55) in tRNA = pseudouridine(55) in tRNA. In terms of biological role, responsible for synthesis of pseudouridine from uracil-55 in the psi GC loop of transfer RNAs. This Thermosipho melanesiensis (strain DSM 12029 / CIP 104789 / BI429) protein is tRNA pseudouridine synthase B.